A 382-amino-acid chain; its full sequence is 3-dehydroquinate synthase (382 aa).

NAD(+) is bound by residues 81–86, 115–119, 139–140, Lys-152, and Lys-161; these read EGEISK, GVVGD, and TS. Zn(2+)-binding residues include Glu-194, His-256, and His-274.

The protein belongs to the sugar phosphate cyclases superfamily. Dehydroquinate synthase family. NAD(+) serves as cofactor. Requires Co(2+) as cofactor. Zn(2+) is required as a cofactor.

It localises to the cytoplasm. It carries out the reaction 7-phospho-2-dehydro-3-deoxy-D-arabino-heptonate = 3-dehydroquinate + phosphate. It participates in metabolic intermediate biosynthesis; chorismate biosynthesis; chorismate from D-erythrose 4-phosphate and phosphoenolpyruvate: step 2/7. Functionally, catalyzes the conversion of 3-deoxy-D-arabino-heptulosonate 7-phosphate (DAHP) to dehydroquinate (DHQ). This is 3-dehydroquinate synthase from Bradyrhizobium diazoefficiens (strain JCM 10833 / BCRC 13528 / IAM 13628 / NBRC 14792 / USDA 110).